Consider the following 46-residue polypeptide: Photosystem II reaction center protein K (46 aa).

A propeptide spanning residues 1 to 9 (MLTLLNTFA) is cleaved from the precursor. Residues 25–45 (LPLIPLFFFLLVFVWQAAVGF) traverse the membrane as a helical segment.

It belongs to the PsbK family. PSII is composed of 1 copy each of membrane proteins PsbA, PsbB, PsbC, PsbD, PsbE, PsbF, PsbH, PsbI, PsbJ, PsbK, PsbL, PsbM, PsbT, PsbX, PsbY, Psb30/Ycf12, peripheral proteins PsbO, CyanoQ (PsbQ), PsbU, PsbV and a large number of cofactors. It forms dimeric complexes.

The protein localises to the cellular thylakoid membrane. Its function is as follows. One of the components of the core complex of photosystem II (PSII). PSII is a light-driven water:plastoquinone oxidoreductase that uses light energy to abstract electrons from H(2)O, generating O(2) and a proton gradient subsequently used for ATP formation. It consists of a core antenna complex that captures photons, and an electron transfer chain that converts photonic excitation into a charge separation. The chain is Photosystem II reaction center protein K from Prochlorococcus marinus (strain MIT 9515).